The primary structure comprises 298 residues: Transcription factor RAX2 (298 aa).

HTH myb-type domains are found at residues 9-62 (KANV…LNYL) and 63-117 (RPNI…KKKL). DNA-binding regions (H-T-H motif) lie at residues 38–62 (WIAL…LNYL) and 90–113 (WSVI…NTKL).

Ubiquitous, with higher levels in roots, flowers, and shoot tips. Found in all cells of the shoot tips.

It localises to the nucleus. Transcription activator. Positively regulates axillary meristems (AMs) formation and development, especially during inflorescence. This chain is Transcription factor RAX2 (RAX2), found in Arabidopsis thaliana (Mouse-ear cress).